Reading from the N-terminus, the 294-residue chain is RAB7A-interacting MON1-CCZ1 complex subunit 1 (294 aa).

Residue Ala-2 is modified to N-acetylalanine.

This sequence belongs to the RIMOC1 family. Interacts with the MON1A-CCZ1B complex. Interacts with GDP-bound RAB7A and promotes its interaction with the MON1A-CCZ1B complex.

It localises to the cytoplasm. It is found in the cytosol. Functionally, plays an important role in the removal of damaged mitochondria via mitophagy by controlling the stability and localization of RAB7A. Required for the recruitment of RAB7A and ATG9A vesicles to damaged mitochondria and promotes the stability of RAB7A by inhibiting its proteasomal degradation during mitophagy. The polypeptide is RAB7A-interacting MON1-CCZ1 complex subunit 1 (Homo sapiens (Human)).